We begin with the raw amino-acid sequence, 321 residues long: Beta-ketoacyl-[acyl-carrier-protein] synthase III (321 aa).

Catalysis depends on residues C113 and H246. Positions 247–251 are ACP-binding; it reads QANVR. N276 is a catalytic residue.

Belongs to the thiolase-like superfamily. FabH family. Homodimer.

It localises to the cytoplasm. It catalyses the reaction malonyl-[ACP] + acetyl-CoA + H(+) = 3-oxobutanoyl-[ACP] + CO2 + CoA. It functions in the pathway lipid metabolism; fatty acid biosynthesis. Functionally, catalyzes the condensation reaction of fatty acid synthesis by the addition to an acyl acceptor of two carbons from malonyl-ACP. Catalyzes the first condensation reaction which initiates fatty acid synthesis and may therefore play a role in governing the total rate of fatty acid production. Possesses both acetoacetyl-ACP synthase and acetyl transacylase activities. Its substrate specificity determines the biosynthesis of branched-chain and/or straight-chain of fatty acids. In Enterococcus faecalis (strain ATCC 700802 / V583), this protein is Beta-ketoacyl-[acyl-carrier-protein] synthase III.